The primary structure comprises 169 residues: uncharacterized protein (169 aa).

The Nudix hydrolase domain maps to 28-157 (ELHLVVHVCI…EFIPYFFLNQ (130 aa)). Positions 65 to 87 (AGSALKGETSRQAAEREVKEELG) match the Nudix box motif. Mg(2+) is bound by residues Glu-81 and Glu-85.

The protein belongs to the Nudix hydrolase family. Mg(2+) is required as a cofactor.

This is an uncharacterized protein from Listeria innocua serovar 6a (strain ATCC BAA-680 / CLIP 11262).